The chain runs to 429 residues: S-adenosylmethionine synthase (429 aa).

His14 contributes to the ATP binding site. Asp16 lines the Mg(2+) pocket. Glu42 is a K(+) binding site. L-methionine is bound by residues Glu55 and Gln98. A flexible loop region spans residues 98–108 (QSADINRGVDR). Residues 165 to 167 (DAK), 252 to 253 (KF), Asp261, 267 to 268 (RK), Ala284, and Lys288 contribute to the ATP site. Asp261 contacts L-methionine. Lys292 contributes to the L-methionine binding site.

Belongs to the AdoMet synthase family. Homotetramer; dimer of dimers. Requires Mg(2+) as cofactor. K(+) is required as a cofactor.

The protein localises to the cytoplasm. It carries out the reaction L-methionine + ATP + H2O = S-adenosyl-L-methionine + phosphate + diphosphate. The protein operates within amino-acid biosynthesis; S-adenosyl-L-methionine biosynthesis; S-adenosyl-L-methionine from L-methionine: step 1/1. Catalyzes the formation of S-adenosylmethionine (AdoMet) from methionine and ATP. The overall synthetic reaction is composed of two sequential steps, AdoMet formation and the subsequent tripolyphosphate hydrolysis which occurs prior to release of AdoMet from the enzyme. In Porphyromonas gingivalis (strain ATCC 33277 / DSM 20709 / CIP 103683 / JCM 12257 / NCTC 11834 / 2561), this protein is S-adenosylmethionine synthase.